A 180-amino-acid polypeptide reads, in one-letter code: Crossover junction endodeoxyribonuclease RuvC (180 aa).

Active-site residues include Asp13, Glu73, and Asp145. Mg(2+) is bound by residues Asp13, Glu73, and Asp145.

It belongs to the RuvC family. In terms of assembly, homodimer which binds Holliday junction (HJ) DNA. The HJ becomes 2-fold symmetrical on binding to RuvC with unstacked arms; it has a different conformation from HJ DNA in complex with RuvA. In the full resolvosome a probable DNA-RuvA(4)-RuvB(12)-RuvC(2) complex forms which resolves the HJ. It depends on Mg(2+) as a cofactor.

It localises to the cytoplasm. It carries out the reaction Endonucleolytic cleavage at a junction such as a reciprocal single-stranded crossover between two homologous DNA duplexes (Holliday junction).. In terms of biological role, the RuvA-RuvB-RuvC complex processes Holliday junction (HJ) DNA during genetic recombination and DNA repair. Endonuclease that resolves HJ intermediates. Cleaves cruciform DNA by making single-stranded nicks across the HJ at symmetrical positions within the homologous arms, yielding a 5'-phosphate and a 3'-hydroxyl group; requires a central core of homology in the junction. The consensus cleavage sequence is 5'-(A/T)TT(C/G)-3'. Cleavage occurs on the 3'-side of the TT dinucleotide at the point of strand exchange. HJ branch migration catalyzed by RuvA-RuvB allows RuvC to scan DNA until it finds its consensus sequence, where it cleaves and resolves the cruciform DNA. This is Crossover junction endodeoxyribonuclease RuvC from Magnetococcus marinus (strain ATCC BAA-1437 / JCM 17883 / MC-1).